Consider the following 589-residue polypeptide: Complement component C8 beta chain (589 aa).

An N-terminal signal peptide occupies residues 1–31; it reads MKIGAQVWRALAKSCLLCATLGCLHFPGSRG. Positions 32–53 are excised as a propeptide; it reads GKPDFFETKAVNGSLVKSRPVR. N-linked (GlcNAc...) asparagine glycosylation is present at Asn-43. The 54-residue stretch at 63–116 folds into the TSP type-1 1 domain; that stretch reads DCELSTWSSWTACDPCQKKRYRHTYLLRPSQFYGELCDLSDKEVEDCVTNQPCR. 7 disulfide bridges follow: Cys-64–Cys-99, Cys-75–Cys-109, Cys-78–Cys-115, Cys-121–Cys-132, Cys-126–Cys-145, Cys-139–Cys-154, and Cys-161–Cys-199. C-linked (Man) tryptophan glycosylation is found at Trp-69 and Trp-72. An LDL-receptor class A domain is found at 120 to 155; that stretch reads RCEGFVCAQTGRCVNRRLLCNGDNDCGDQSDEANCR. Residues Leu-137, Asn-140, Asp-142, Asp-144, Asp-150, and Glu-151 each contribute to the Ca(2+) site. Residues 157–503 form the MACPF domain; that stretch reads IYKNCQREME…EFQSEVSSCR (347 aa). A run of 8 beta stranded transmembrane segments spans residues 201 to 206, 209 to 213, 251 to 258, 261 to 268, 328 to 335, 338 to 343, 378 to 385, and 391 to 398; these read PHYILD, FRKPY, FNFTSGFK, GVMDLGIK, SYGEYRDL, DFGTHF, AGGSFGIG, and VYVKVGVS. Cys-377 and Cys-402 are disulfide-bonded. One can recognise an EGF-like domain in the interval 404–534; sequence DIMKEINERN…PGGFQGTACE (131 aa). Thr-417 is modified (phosphothreonine). 4 cysteine pairs are disulfide-bonded: Cys-502–Cys-549, Cys-504–Cys-520, Cys-507–Cys-522, and Cys-524–Cys-533. Positions 544 to 587 constitute a TSP type-1 2 domain; that stretch reads DGKWSCWSDWSACSGGHKTRHRQCNNPAPHKGGSPCSGPASETL. C-linked (Man) tryptophan glycosylation is found at Trp-550 and Trp-553. Residues Cys-556 and Cys-589 are joined by a disulfide bond. Residues 570-589 form a disordered region; the sequence is PAPHKGGSPCSGPASETLNC.

It belongs to the complement C6/C7/C8/C9 family. In terms of assembly, heterotrimer of 3 chains: alpha (C8A), beta (C8B) and gamma (C8G); the alpha and gamma chains are disulfide bonded. Component of the membrane attack complex (MAC), composed of complement C5b, C6, C7, C8A, C8B, C8G and multiple copies of the pore-forming subunit C9. In terms of processing, N-glycosylated; contains one or two bound glycans. Not O-glycosylated.

The protein localises to the secreted. It localises to the target cell membrane. Its activity is regulated as follows. Membrane attack complex (MAC) assembly is inhibited by CD59, thereby protecting self-cells from damage during complement activation. CD59 acts by binding to the beta-haipins of C8 (C8A and C8B), forming an intermolecular beta-sheet that prevents incorporation of the multiple copies of C9 required for complete formation of the osmolytic pore. MAC assembly is also inhibited by clusterin (CLU) chaperones that inhibit polymerization of C9. Its function is as follows. Component of the membrane attack complex (MAC), a multiprotein complex activated by the complement cascade, which inserts into a target cell membrane and forms a pore, leading to target cell membrane rupture and cell lysis. The MAC is initiated by proteolytic cleavage of C5 into complement C5b in response to the classical, alternative, lectin and GZMK complement pathways. The complement pathways consist in a cascade of proteins that leads to phagocytosis and breakdown of pathogens and signaling that strengthens the adaptive immune system. C8B, together with C8A and C8G, inserts into the target membrane, but does not form pores by itself. During MAC assembly, associates with C5b, C6 and C7 to form the C5b8 intermediate complex that inserts into the target membrane and traverses the bilayer increasing membrane rigidity. This is Complement component C8 beta chain (C8b) from Mus musculus (Mouse).